Consider the following 904-residue polypeptide: Alanine--tRNA ligase (904 aa).

The Zn(2+) site is built by H584, H588, C687, and H691.

The protein belongs to the class-II aminoacyl-tRNA synthetase family. Zn(2+) serves as cofactor.

It localises to the cytoplasm. The catalysed reaction is tRNA(Ala) + L-alanine + ATP = L-alanyl-tRNA(Ala) + AMP + diphosphate. In terms of biological role, catalyzes the attachment of alanine to tRNA(Ala) in a two-step reaction: alanine is first activated by ATP to form Ala-AMP and then transferred to the acceptor end of tRNA(Ala). Also edits incorrectly charged Ser-tRNA(Ala) and Gly-tRNA(Ala) via its editing domain. In Mycobacterium tuberculosis (strain ATCC 25177 / H37Ra), this protein is Alanine--tRNA ligase.